Reading from the N-terminus, the 98-residue chain is NADH-ubiquinone oxidoreductase chain 4L (98 aa).

A run of 3 helical transmembrane segments spans residues 1–21, 26–46, and 61–81; these read MPSI…GTLI, LMSS…LTSL, and IILL…LVMV.

This sequence belongs to the complex I subunit 4L family. As to quaternary structure, core subunit of respiratory chain NADH dehydrogenase (Complex I) which is composed of 45 different subunits.

Its subcellular location is the mitochondrion inner membrane. The catalysed reaction is a ubiquinone + NADH + 5 H(+)(in) = a ubiquinol + NAD(+) + 4 H(+)(out). In terms of biological role, core subunit of the mitochondrial membrane respiratory chain NADH dehydrogenase (Complex I) which catalyzes electron transfer from NADH through the respiratory chain, using ubiquinone as an electron acceptor. Part of the enzyme membrane arm which is embedded in the lipid bilayer and involved in proton translocation. The chain is NADH-ubiquinone oxidoreductase chain 4L (MT-ND4L) from Otolemur crassicaudatus (Brown greater galago).